A 483-amino-acid chain; its full sequence is Spermatogenesis-defective protein 39 homolog (483 aa).

This sequence belongs to the SPE39 family. In terms of assembly, interacts with vps33b. In terms of tissue distribution, high levels detected in liver and small intestine of larvae at 5 days post-fertilization.

The protein resides in the cytoplasm. It localises to the cytoplasmic vesicle. It is found in the early endosome. Its subcellular location is the recycling endosome. The protein localises to the late endosome. Functionally, proposed to be involved in endosomal maturation implicating in part vps33b. In epithelial cells, the vps33b:vipas39 complex may play a role in the apical rab11a-dependent recycling pathway and in the maintenance of the apical-basolateral polarity. May play a role in lysosomal trafficking, probably via association with the core HOPS complex in a discrete population of endosomes; the functions seems to be independent of vps33b. May play a role in vesicular trafficking during spermatogenesis. May be involved in direct or indirect transcriptional regulation of E-cadherin. This Danio rerio (Zebrafish) protein is Spermatogenesis-defective protein 39 homolog (vipas39).